The chain runs to 423 residues: vacuole-related protein 17 (423 aa).

Ala2 carries the post-translational modification N-acetylalanine. Residues 109-134 (ATVPNEAPNDSPQSQSTRSSLGSFQP) form a disordered region. The MYO2-binding stretch occupies residues 110-170 (TVPNEAPNDS…NPINEVDCPS (61 aa)). The span at 116-131 (PNDSPQSQSTRSSLGS) shows a compositional bias: polar residues. Ser119 bears the Phosphoserine mark. Phosphothreonine is present on Thr149. The tract at residues 150–211 (PSKPPKKSVG…SKKPSSSDTY (62 aa)) is disordered. Position 178 is a phosphoserine (Ser178). The segment covering 182-192 (QPARNRTLRAA) has biased composition (basic residues). Over residues 199 to 211 (LNKSKKPSSSDTY) the composition is skewed to polar residues. Residue Thr248 is modified to Phosphothreonine. Phosphoserine is present on Ser269. Positions 290 to 380 (SASFFRPSNP…ISESFQSKRG (91 aa)) are VAC8-binding.

It belongs to the VAC17 family. As to quaternary structure, interacts with MYO2 and VAC8. Interacts with ATG18.

The protein localises to the vacuole membrane. Functionally, vacuole-specific MYO2 receptor required for vacuole inheritance. Binds simultaneously to MYO2 and to VAC8, a vacuolar membrane protein, forming a transport complex which moves the attached vacuole membrane along actin cables into the bud. Once the vacuole arrives in the bud, VAC17 is degraded, depositing the vacuole in its correct location. This is vacuole-related protein 17 (VAC17) from Saccharomyces cerevisiae (strain ATCC 204508 / S288c) (Baker's yeast).